A 62-amino-acid chain; its full sequence is Short neurotoxin 2 (62 aa).

Residues 1–20 form a disordered region; it reads MTCYNQQSSEAKTTTTCSGG. Cystine bridges form between Cys3-Cys24, Cys17-Cys41, Cys43-Cys54, and Cys55-Cys60.

This sequence belongs to the three-finger toxin family. Short-chain subfamily. Type I alpha-neurotoxin sub-subfamily. Expressed by the venom gland.

It is found in the secreted. Its function is as follows. Binds to muscle nicotinic acetylcholine receptor (nAChR) and inhibit acetylcholine from binding to the receptor, thereby impairing neuromuscular transmission. The sequence is that of Short neurotoxin 2 from Oxyuranus scutellatus scutellatus (Australian taipan).